The following is a 193-amino-acid chain: CDP-diacylglycerol--glycerol-3-phosphate 3-phosphatidyltransferase (193 aa).

Helical transmembrane passes span 8 to 28 (ITLA…APFD), 39 to 59 (IPVA…TDWV), 88 to 108 (AALI…IVII), and 157 to 177 (LVSF…TVVS).

This sequence belongs to the CDP-alcohol phosphatidyltransferase class-I family.

It is found in the cell membrane. It carries out the reaction a CDP-1,2-diacyl-sn-glycerol + sn-glycerol 3-phosphate = a 1,2-diacyl-sn-glycero-3-phospho-(1'-sn-glycero-3'-phosphate) + CMP + H(+). Its pathway is phospholipid metabolism; phosphatidylglycerol biosynthesis; phosphatidylglycerol from CDP-diacylglycerol: step 1/2. In terms of biological role, this protein catalyzes the committed step to the synthesis of the acidic phospholipids. In Bacillus subtilis (strain 168), this protein is CDP-diacylglycerol--glycerol-3-phosphate 3-phosphatidyltransferase (pgsA).